The chain runs to 110 residues: Parvalbumin alpha (110 aa).

EF-hand domains lie at 39 to 74 and 78 to 110; these read KNAK…FAPE and LSEK…VANS. Ca(2+) is bound by residues Asp-52, Asp-54, Ser-56, Phe-58, Glu-60, Glu-63, Asp-91, Asp-93, Asp-95, Lys-97, and Glu-102.

It belongs to the parvalbumin family.

Functionally, in muscle, parvalbumin is thought to be involved in relaxation after contraction. It binds two calcium ions. In Callorhinchus milii (Ghost shark), this protein is Parvalbumin alpha.